A 360-amino-acid polypeptide reads, in one-letter code: Type II methyltransferase M2.ScrFI (360 aa).

Residues 2–360 (LRVFEAFAGY…SLFKELFKSQ (359 aa)) enclose the SAM-dependent MTase C5-type domain. Residue C127 is part of the active site.

The protein belongs to the class I-like SAM-binding methyltransferase superfamily. C5-methyltransferase family.

The enzyme catalyses a 2'-deoxycytidine in DNA + S-adenosyl-L-methionine = a 5-methyl-2'-deoxycytidine in DNA + S-adenosyl-L-homocysteine + H(+). In terms of biological role, a methylase, recognizes the double-stranded sequence 5'-CCNGG-3', methylates C-2 on both strands, and protects the DNA from cleavage by the ScrFI endonuclease. The sequence is that of Type II methyltransferase M2.ScrFI (scrFIBM) from Lactococcus lactis subsp. cremoris (Streptococcus cremoris).